The sequence spans 655 residues: p-hydroxybenzoic acid efflux pump subunit AaeB (655 aa).

11 helical membrane-spanning segments follow: residues 13–33 (FAVK…HFQL), 38–58 (WAVL…GGEP), 69–89 (LRII…ITMI), 93–113 (LLMI…SSLV), 121–141 (WGLS…EPLL), 152–172 (EIVI…PRSV), 370–390 (LFWL…IAVV), 407–427 (FIYG…VIIP), 431–451 (QSML…GIEV), 459–479 (MGAL…TFHF), and 482–502 (FLDS…VILL).

This sequence belongs to the aromatic acid exporter ArAE (TC 2.A.85) family.

Its subcellular location is the cell inner membrane. In terms of biological role, forms an efflux pump with AaeA. Could function as a metabolic relief valve, allowing to eliminate certain compounds when they accumulate to high levels in the cell. The sequence is that of p-hydroxybenzoic acid efflux pump subunit AaeB from Citrobacter koseri (strain ATCC BAA-895 / CDC 4225-83 / SGSC4696).